The chain runs to 708 residues: Polyribonucleotide nucleotidyltransferase (708 aa).

Mg(2+) contacts are provided by D486 and D492. In terms of domain architecture, KH spans 553 to 612 (PRITTIKVPPQKVREVIGSGGKVIREITEVTGTKIDIEDDGTIKIASADAEATQRAVDWI). The S1 motif domain occupies 622–690 (GVVYTGKVVK…DRGKIKLSMK (69 aa)).

The protein belongs to the polyribonucleotide nucleotidyltransferase family. Mg(2+) serves as cofactor.

The protein localises to the cytoplasm. It catalyses the reaction RNA(n+1) + phosphate = RNA(n) + a ribonucleoside 5'-diphosphate. Involved in mRNA degradation. Catalyzes the phosphorolysis of single-stranded polyribonucleotides processively in the 3'- to 5'-direction. The chain is Polyribonucleotide nucleotidyltransferase from Rhodospirillum rubrum (strain ATCC 11170 / ATH 1.1.1 / DSM 467 / LMG 4362 / NCIMB 8255 / S1).